The sequence spans 389 residues: Anhydro-N-acetylmuramic acid kinase (389 aa).

11–18 lines the ATP pocket; sequence GTSLDGVD.

This sequence belongs to the anhydro-N-acetylmuramic acid kinase family.

The enzyme catalyses 1,6-anhydro-N-acetyl-beta-muramate + ATP + H2O = N-acetyl-D-muramate 6-phosphate + ADP + H(+). The protein operates within amino-sugar metabolism; 1,6-anhydro-N-acetylmuramate degradation. Its pathway is cell wall biogenesis; peptidoglycan recycling. In terms of biological role, catalyzes the specific phosphorylation of 1,6-anhydro-N-acetylmuramic acid (anhMurNAc) with the simultaneous cleavage of the 1,6-anhydro ring, generating MurNAc-6-P. Is required for the utilization of anhMurNAc either imported from the medium or derived from its own cell wall murein, and thus plays a role in cell wall recycling. The chain is Anhydro-N-acetylmuramic acid kinase from Albidiferax ferrireducens (strain ATCC BAA-621 / DSM 15236 / T118) (Rhodoferax ferrireducens).